We begin with the raw amino-acid sequence, 515 residues long: ADP,ATP carrier protein 1 (515 aa).

Helical transmembrane passes span 24–44, 62–82, 93–113, 124–144, 149–169, 184–204, 226–246, 286–306, 329–349, 358–378, 383–403, and 465–485; these read LKKV…YTVL, AIPF…MLIY, ALFY…PTVI, EFAD…VAIL, FAAF…LMFW, FYAL…RAIV, LLMA…WWIN, YILL…LIEV, FSFW…GNVI, ALVT…LVIF, SGLV…VGAI, and IGAM…IWLV.

Belongs to the ADP/ATP translocase tlc family.

The protein localises to the cell membrane. This chain is ADP,ATP carrier protein 1 (tlcA), found in Chlamydia pneumoniae (Chlamydophila pneumoniae).